The sequence spans 1017 residues: A-type ATP synthase subunit A (1017 aa).

One can recognise a DOD-type homing endonuclease domain in the interval 396 to 529; sequence FLGYLIADGT…FSYLLAKLGI (134 aa).

This sequence belongs to the ATPase alpha/beta chains family. As to quaternary structure, has multiple subunits with at least A(3), B(3), C, D, E, F, H, I and proteolipid K(x). Post-translationally, this protein undergoes a protein self splicing that involves a post-translational excision of the VDE intervening region (intein) followed by peptide ligation.

It localises to the cell membrane. The enzyme catalyses ATP + H2O + 4 H(+)(in) = ADP + phosphate + 5 H(+)(out). In terms of biological role, component of the A-type ATP synthase that produces ATP from ADP in the presence of a proton gradient across the membrane. The A chain is the catalytic subunit. This Pyrococcus abyssi (strain GE5 / Orsay) protein is A-type ATP synthase subunit A.